A 1855-amino-acid polypeptide reads, in one-letter code: MAASELYTKFARVWIPDPEEVWKSAELLKDYKPGDKVLLLHLEEGKDLEYHLDPKTKELPHLRNPDILVGENDLTALSYLHEPAVLHNLRVRFIDSKLIYTYCGIVLVAINPYEQLPIYGEDIINAYSGQNMGDMDPHIFAVAEEAYKQMARDERNQSIIVSGESGAGKTVSAKYAMRYFATVSGSASEANVEEKVLASNPIMESIGNAKTTRNDNSSRFGKYIEIGFDKRYRIIGANMRTYLLEKSRVVFQAEEERNYHIFYQLCASAKLPEFKMLRLGNADNFNYTKQGGSPVIEGVDDAKEMAHTRQACTLLGISESHQMGIFRILAGILHLGNVGFTSRDADSCTIPPKHEPLCIFCELMGVDYEEMCHWLCHRKLATATETYIKPISKLQATNARDALAKHIYAKLFNWIVDNVNQALHSAVKQHSFIGVLDIYGFETFEINSFEQFCINYANEKLQQQFNMHVFKLEQEEYMKEQIPWTLIDFYDNQPCINLIESKLGILDLLDEECKMPKGTDDTWAQKLYNTHLNKCALFEKPRLSNKAFIIQHFADKVEYQCEGFLEKNKDTVFEEQIKVLKSSKFKMLPELFQDDEKAISPTSATSSGRTPLTRTPAKPTKGRPGQMAKEHKKTVGHQFRNSLHLLMETLNATTPHYVRCIKPNDFKFPFTFDEKRAVQQLRACGVLETIRISAAGFPSRWTYQEFFSRYRVLMKQKDVLSDRKQTCKNVLEKLILDKDKYQFGKTKIFFRAGQVAYLEKLRADKLRAACIRIQKTIRGWLLRKKYLRMRKAAITMQRYVRGYQARCYAKFLRRTKAATIIQKYWRMYVVRRRYKIRRAATIVLQSYLRGFLARNRYRKILREHKAVIIQKRVRGWLARTHYKRSMHAIIYLQCCFRRMMAKRELKKLKIEARSVERYKKLHIGMENKIMQLQRKVDEQNKDYKCLVEKLTNLEGIYNSETEKLRSDLERLQLSEEEAKVATGRVLSLQEEIAKLRKDLEQTRSEKKCIEEHADRYKQETEQLVSNLKEENTLLKQEKEALNHRIVQQAKEMTETMEKKLVEETKQLELDLNDERLRYQNLLNEFSRLEERYDDLKEEMTLMVHVPKPGHKRTDSTHSSNESEYIFSSEIAEMEDIPSRTEEPSEKKVPLDMSLFLKLQKRVTELEQEKQVMQDELDRKEEQVLRSKAKEEERPQIRGAELEYESLKRQELESENKKLKNELNELRKALSEKSAPEVTAPGAPAYRVLMEQLTSVSEELDVRKEEVLILRSQLVSQKEAIQPKDDKNTMTDSTILLEDVQKMKDKGEIAQAYIGLKETNRSSALDYHELNEDGELWLVYEGLKQANRLLESQLQSQKRSHENEAEALRGEIQSLKEENNRQQQLLAQNLQLPPEARIEASLQHEITRLTNENLDLMEQLEKQDKTVRKLKKQLKVFAKKIGELEVGQMENISPGQIIDEPIRPVNIPRKEKDFQGMLEYKKEDEQKLVKNLILELKPRGVAVNLIPGLPAYILFMCVRHADYLNDDQKVRSLLTSTINSIKKVLKKRGDDFETVSFWLSNTCRFLHCLKQYSGEEGFMKHNTSRQNEHCLTNFDLAEYRQVLSDLAIQIYQQLVRVLENILQPMIVSGMLEHETIQGVSGVKPTGLRKRTSSIADEGTYTLDSILRQLNSFHSVMCQHGMDPELIKQVVKQMFYIIGAITLNNLLLRKDMCSWSKGMQIRYNVSQLEEWLRDKNLMNSGAKETLEPLIQAAQLLQVKKKTDDDAEAICSMCNALTTAQIVKVLNLYTPVNEFEERVSVSFIRTIQMRLRDRKDSPQLLMDAKHIFPVTFPFNPSSLALETIQIPASLGLGFISRV.

Ala2 carries the N-acetylalanine modification. The region spanning 8–60 is the Myosin N-terminal SH3-like domain; that stretch reads TKFARVWIPDPEEVWKSAELLKDYKPGDKVLLLHLEEGKDLEYHLDPKTKELP. A Myosin motor domain is found at 69–763; it reads VGENDLTALS…QVAYLEKLRA (695 aa). 163–170 is an ATP binding site; that stretch reads GESGAGKT. Residues 598 to 631 form a disordered region; the sequence is AISPTSATSSGRTPLTRTPAKPTKGRPGQMAKEH. At Ser600 the chain carries Phosphoserine. The span at 600–613 shows a compositional bias: polar residues; that stretch reads SPTSATSSGRTPLT. Positions 643–665 are actin-binding; the sequence is LHLLMETLNATTPHYVRCIKPND. 6 consecutive IQ domains span residues 766–788, 789–818, 814–836, 837–861, 862–883, and 885–914; these read LRAA…KYLR, MRKA…TKAA, RTKA…RYKI, RRAA…RKIL, REHK…THYK, and SMHA…EARS. 2 coiled-coil regions span residues 914 to 1237 and 1338 to 1445; these read SVER…APEV and VYEG…ELEV. At Thr1032 the chain carries Phosphothreonine. 2 positions are modified to phosphoserine: Ser1452 and Ser1652. The 277-residue stretch at 1534–1810 folds into the Dilute domain; that stretch reads TSTINSIKKV…IRTIQMRLRD (277 aa). Position 1760 is a phosphothreonine (Thr1760).

The protein belongs to the TRAFAC class myosin-kinesin ATPase superfamily. Myosin family. In terms of assembly, may be a homodimer, which associates with multiple calmodulin or myosin light chains. Interacts with RIPL2, the interaction is required for its role in dendrite formation. Interacts with MLPH. Interacts with SYTL4. Interacts with MYRIP. Interacts with RAB10; mediates the transport to the plasma membrane of SLC2A4/GLUT4 storage vesicles. Interacts with FMR1; this interaction occurs in association with polyribosome. As to expression, detected in melanocytes.

The enzyme catalyses ATP + H2O = ADP + phosphate + H(+). Functionally, processive actin-based motor that can move in large steps approximating the 36-nm pseudo-repeat of the actin filament. Can hydrolyze ATP in the presence of actin, which is essential for its function as a motor protein. Involved in melanosome transport. Also mediates the transport of vesicles to the plasma membrane. May also be required for some polarization process involved in dendrite formation. The chain is Unconventional myosin-Va (MYO5A) from Homo sapiens (Human).